The sequence spans 205 residues: Ribosomal RNA small subunit methyltransferase G (205 aa).

S-adenosyl-L-methionine contacts are provided by residues Gly73, Leu78, Val124–Glu125, and Arg138.

The protein belongs to the methyltransferase superfamily. RNA methyltransferase RsmG family.

It localises to the cytoplasm. It carries out the reaction guanosine(527) in 16S rRNA + S-adenosyl-L-methionine = N(7)-methylguanosine(527) in 16S rRNA + S-adenosyl-L-homocysteine. Specifically methylates the N7 position of guanine in position 527 of 16S rRNA. The chain is Ribosomal RNA small subunit methyltransferase G from Actinobacillus pleuropneumoniae serotype 5b (strain L20).